The following is a 354-amino-acid chain: Membrane progestin receptor beta (354 aa).

Residues 1 to 76 (MTTAILERLS…FSLFQKHNEV (76 aa)) lie on the Cytoplasmic side of the membrane. Residues 77 to 97 (VNVWTHLLAALAVLLRFWAFV) form a helical membrane-spanning segment. Residues 98-111 (EAGALQWASPHTLP) lie on the Extracellular side of the membrane. The helical transmembrane segment at 112-132 (LLLFILSSITYLTCSLLAHLL) threads the bilayer. At 133-173 (QSKSELSHYTFYFVDYVGVSVYQYGSALAHFFYSSDQAWYE) the chain is on the cytoplasmic side. A helical membrane pass occupies residues 174-194 (LFWIFFLPAAAFCGWLSCAGC). Over 195–213 (CYAKYRYRRPYPVMRKICQ) the chain is Extracellular. The chain crosses the membrane as a helical span at residues 214-234 (VVPAGLAFVLDISPVAHRVAL). Topologically, residues 235-243 (CHLAGCQEQ) are cytoplasmic. Residues 244–264 (AAWYHTLQILFFLVSAYFFSC) form a helical membrane-spanning segment. Residues 265-283 (PVPEKYFPGSCDIVGHGHQ) are Extracellular-facing. Residues 284-304 (IFHAFLSVCTLSQLEAILLDY) form a helical membrane-spanning segment. Topologically, residues 305–315 (QGRHEIFLQRH) are cytoplasmic. A helical transmembrane segment spans residues 316–336 (GPLSVYSACLSFFVLAACSAA). The Extracellular segment spans residues 337–354 (TATLLRHKVKDRLIKKDS).

Belongs to the ADIPOR family. In terms of tissue distribution, expressed in brain and testis.

It localises to the cell membrane. In terms of biological role, plasma membrane progesterone (P4) receptor coupled to G proteins. Seems to act through a G(i) mediated pathway. May be involved in oocyte maturation. Also binds dehydroepiandrosterone (DHEA), pregnanolone, pregnenolone and allopregnanolone. The chain is Membrane progestin receptor beta from Mus musculus (Mouse).